The chain runs to 612 residues: UvrABC system protein C (612 aa).

One can recognise a GIY-YIG domain in the interval 15-93 (HLPGVYRMYD…IKQHQPKYNV (79 aa)). The UVR domain maps to 203–238 (SQVIDYLMQKMEIAASELDFETAARFRDQIQSVRAV).

The protein belongs to the UvrC family. Interacts with UvrB in an incision complex.

It localises to the cytoplasm. Its function is as follows. The UvrABC repair system catalyzes the recognition and processing of DNA lesions. UvrC both incises the 5' and 3' sides of the lesion. The N-terminal half is responsible for the 3' incision and the C-terminal half is responsible for the 5' incision. The protein is UvrABC system protein C of Haemophilus ducreyi (strain 35000HP / ATCC 700724).